The primary structure comprises 133 residues: ATP synthase epsilon chain (133 aa).

This sequence belongs to the ATPase epsilon chain family. F-type ATPases have 2 components, CF(1) - the catalytic core - and CF(0) - the membrane proton channel. CF(1) has five subunits: alpha(3), beta(3), gamma(1), delta(1), epsilon(1). CF(0) has three main subunits: a, b and c.

The protein localises to the cell inner membrane. Functionally, produces ATP from ADP in the presence of a proton gradient across the membrane. The sequence is that of ATP synthase epsilon chain from Desulfosudis oleivorans (strain DSM 6200 / JCM 39069 / Hxd3) (Desulfococcus oleovorans).